Here is an 810-residue protein sequence, read N- to C-terminus: RING finger protein unkempt homolog (810 aa).

Positions 1 to 24 are disordered; that stretch reads MSKGPGPGGSAASSAPPAATAQVL. Residues 10–19 are compositionally biased toward low complexity; it reads SAASSAPPAA. 5 C3H1-type zinc fingers span residues 84–113, 124–154, 215–241, 251–285, and 293–321; these read YSPD…HRTT, YYKT…HGPH, NYKT…HNSK, KYRS…HTRT, and IYKS…HVEQ. The interval 239–265 is disordered; sequence NSKDRRRSPRKHKYRSSPCPNVKHGDE. The residue at position 240 (serine 240) is a Phosphoserine. Over residues 241-253 the composition is skewed to basic residues; sequence KDRRRSPRKHKYR. The tract at residues 324–343 is disordered; the sequence is LSDDLQPSSAVSSPTQPGPV. Polar residues predominate over residues 328-338; it reads LQPSSAVSSPT. 4 positions are modified to phosphoserine: serine 374, serine 378, serine 385, and serine 631. A coiled-coil region spans residues 643 to 723; sequence GAAELARLRQ…QEELERLHAG (81 aa). Residues 766-801 form an RING-type; degenerate zinc finger; that stretch reads SVKCLKCQEQKRAVLPCQHAALCELCAEGSECPICQ.

Belongs to the unkempt family.

The protein localises to the cytoplasm. Functionally, sequence-specific RNA-binding protein which plays an important role in the establishment and maintenance of the early morphology of cortical neurons during embryonic development. Acts as a translation repressor and controls a translationally regulated cell morphology program to ensure proper structuring of the nervous system. Translational control depends on recognition of its binding element within target mRNAs which consists of a mandatory UAG trimer upstream of a U/A-rich motif. Associated with polysomes. This Homo sapiens (Human) protein is RING finger protein unkempt homolog (UNK).